The primary structure comprises 195 residues: Proline-rich protein 3 (195 aa).

The N-terminal stretch at 1-29 (MKMNFFNSFPQYGVYILGLNLLLCGVSEG) is a signal peptide.

In terms of tissue distribution, component of the acid-insoluble organic matrix of calcified layers of the shell (at protein level).

It is found in the secreted. The protein is Proline-rich protein 3 of Lottia gigantea (Giant owl limpet).